Consider the following 1311-residue polypeptide: Clustered mitochondria protein homolog (1311 aa).

Low complexity predominate over residues 1–18; that stretch reads MAEKTNGAAAPNGAADAP. The tract at residues 1 to 27 is disordered; that stretch reads MAEKTNGAAAPNGAADAPKSSPEQAQD. A Clu domain is found at 324–568; the sequence is DITRTQESFL…RITPLDVSWQ (245 aa). The TPR 1 repeat unit spans residues 491 to 525; sequence IDYGAVDGKDLVATDERFVPQFQKLSKALKVKPHA. Basic and acidic residues predominate over residues 606-630; the sequence is SEVAKRGQAKKDQAAVEEKKEAKAE. Disordered regions lie at residues 606–694 and 925–966; these read SEVA…SSDR and PAPV…SSTI. Acidic residues predominate over residues 631 to 661; it reads SEEDSDSSSEEESSSDESDSEESSSDEDEEE. Residues 665 to 675 are compositionally biased toward basic residues; that stretch reads PKKKSVPKKAA. The segment covering 676–694 has biased composition (basic and acidic residues); it reads KKEEVKEEKKDEKEASSDR. TPR repeat units lie at residues 1034 to 1067, 1076 to 1109, and 1118 to 1151; these read ARVYHSLAMLYFQLEEKDAAVELARKAVIVAERT, LLDYLNLSLFLYQLGDSKQALEFTKHALNMWKII, and ITTINNAAVMLQQLKEYHESRRWFEEALRICEVV. Positions 1276–1286 are enriched in basic and acidic residues; that stretch reads LKFIEGTDKQK. The disordered stretch occupies residues 1276–1311; it reads LKFIEGTDKQKKPAAKKRTGRANPKRRGAEPVSTKA. Basic residues predominate over residues 1287–1301; sequence KPAAKKRTGRANPKR.

This sequence belongs to the CLU family. In terms of assembly, may associate with the eukaryotic translation initiation factor 3 (eIF-3) complex.

It is found in the cytoplasm. In terms of biological role, mRNA-binding protein involved in proper cytoplasmic distribution of mitochondria. The polypeptide is Clustered mitochondria protein homolog (Pyricularia oryzae (strain 70-15 / ATCC MYA-4617 / FGSC 8958) (Rice blast fungus)).